A 244-amino-acid chain; its full sequence is tRNA (guanine-N(1)-)-methyltransferase (244 aa).

S-adenosyl-L-methionine is bound by residues Gly113 and Ile133–Leu138.

The protein belongs to the RNA methyltransferase TrmD family. In terms of assembly, homodimer.

The protein localises to the cytoplasm. The enzyme catalyses guanosine(37) in tRNA + S-adenosyl-L-methionine = N(1)-methylguanosine(37) in tRNA + S-adenosyl-L-homocysteine + H(+). Its function is as follows. Specifically methylates guanosine-37 in various tRNAs. This Bacillus pumilus (strain SAFR-032) protein is tRNA (guanine-N(1)-)-methyltransferase.